An 836-amino-acid polypeptide reads, in one-letter code: Protein translocase subunit SecA (836 aa).

ATP-binding positions include glutamine 85, 103–107 (GEGKT), and aspartate 492. Residues cysteine 820, cysteine 822, cysteine 831, and cysteine 832 each coordinate Zn(2+).

It belongs to the SecA family. Monomer and homodimer. Part of the essential Sec protein translocation apparatus which comprises SecA, SecYEG and auxiliary proteins SecDF. Other proteins may also be involved. Requires Zn(2+) as cofactor.

The protein localises to the cell membrane. Its subcellular location is the cytoplasm. It carries out the reaction ATP + H2O + cellular proteinSide 1 = ADP + phosphate + cellular proteinSide 2.. Its function is as follows. Part of the Sec protein translocase complex. Interacts with the SecYEG preprotein conducting channel. Has a central role in coupling the hydrolysis of ATP to the transfer of proteins into and across the cell membrane, serving as an ATP-driven molecular motor driving the stepwise translocation of polypeptide chains across the membrane. The polypeptide is Protein translocase subunit SecA (Clostridium botulinum (strain Alaska E43 / Type E3)).